Reading from the N-terminus, the 444-residue chain is Exodeoxyribonuclease 7 large subunit (444 aa).

Belongs to the XseA family. As to quaternary structure, heterooligomer composed of large and small subunits.

It is found in the cytoplasm. It catalyses the reaction Exonucleolytic cleavage in either 5'- to 3'- or 3'- to 5'-direction to yield nucleoside 5'-phosphates.. In terms of biological role, bidirectionally degrades single-stranded DNA into large acid-insoluble oligonucleotides, which are then degraded further into small acid-soluble oligonucleotides. In Hahella chejuensis (strain KCTC 2396), this protein is Exodeoxyribonuclease 7 large subunit.